The chain runs to 536 residues: Probable E3 ubiquitin-protein ligase ARI13 (536 aa).

Residues 83–328 (KISSCGICFK…GFYKFCNVSM (246 aa)) form a TRIAD supradomain region. Zn(2+) contacts are provided by C87, C90, C106, H108, C111, C114, C135, C140, C180, C185, C210, C212, C217, C220, H225, C230, C277, C280, C297, C299, C304, C307, H314, and C324. The RING-type 1 zinc finger occupies 87-140 (CGICFKTCDDGDYLISTPFCSHMFCKSCWRKYLEKNFYLVEKTQTRISCPHGAC). An IBR-type zinc finger spans residues 158-230 (EMYVEYILRS…MLESHKPVTC (73 aa)). Residues 277–307 (CPHCLRPADLGTKQYLRFLTCACNGRFCWKC) form an RING-type 2; atypical zinc finger. The RanBP2-type zinc finger occupies 495 to 526 (DYGGLFWLCDRCTYGNTWFHKECLMCSDDIAA).

The protein belongs to the RBR family. Ariadne subfamily. Zn(2+) is required as a cofactor.

It catalyses the reaction [E2 ubiquitin-conjugating enzyme]-S-ubiquitinyl-L-cysteine + [acceptor protein]-L-lysine = [E2 ubiquitin-conjugating enzyme]-L-cysteine + [acceptor protein]-N(6)-ubiquitinyl-L-lysine.. It functions in the pathway protein modification; protein ubiquitination. Functionally, might act as an E3 ubiquitin-protein ligase, or as part of E3 complex, which accepts ubiquitin from specific E2 ubiquitin-conjugating enzymes and then transfers it to substrates. In Arabidopsis thaliana (Mouse-ear cress), this protein is Probable E3 ubiquitin-protein ligase ARI13 (ARI13).